Consider the following 544-residue polypeptide: Tyrosyl-DNA phosphodiesterase 1 (544 aa).

H182 functions as the Nucleophile in the catalytic mechanism. Position 184 (K184) interacts with substrate. The interaction with DNA stretch occupies residues 312–316; the sequence is SIGTS. The Proton donor/acceptor role is filled by H432. K434 contributes to the substrate binding site.

Belongs to the tyrosyl-DNA phosphodiesterase family.

Its subcellular location is the nucleus. In terms of biological role, DNA repair enzyme that can remove a variety of covalent adducts from DNA through hydrolysis of a 3'-phosphodiester bond, giving rise to DNA with a free 3' phosphate. Catalyzes the hydrolysis of dead-end complexes between DNA and the topoisomerase I active site tyrosine residue. Hydrolyzes 3'-phosphoglycolates on protruding 3' ends on DNA double-strand breaks due to DNA damage by radiation and free radicals. Also cleaves 5' phosphotyrosyl adducts resulting from dead-end complexes between DNA and the active site tyrosine of topoisomerase II. Contributes to DNA repair after radiation damage. Acts on blunt-ended double-strand DNA breaks and on single-stranded DNA. May have low 3'exonuclease activity and may be able to remove a single nucleoside from the 3'end of DNA and RNA molecules with 3'hydroxyl groups. Has no exonuclease activity towards DNA or RNA with a 3'phosphate. In Saccharomyces cerevisiae (strain ATCC 204508 / S288c) (Baker's yeast), this protein is Tyrosyl-DNA phosphodiesterase 1 (TDP1).